Here is a 61-residue protein sequence, read N- to C-terminus: Photosystem II reaction center protein K (61 aa).

The propeptide occupies 1–24 (MLNIFSLICICLHSTLYSSSFFLA). A helical membrane pass occupies residues 36–56 (IVDFMPVIPLLFFLLAFVWQA).

This sequence belongs to the PsbK family. PSII is composed of 1 copy each of membrane proteins PsbA, PsbB, PsbC, PsbD, PsbE, PsbF, PsbH, PsbI, PsbJ, PsbK, PsbL, PsbM, PsbT, PsbX, PsbY, PsbZ, Psb30/Ycf12, at least 3 peripheral proteins of the oxygen-evolving complex and a large number of cofactors. It forms dimeric complexes.

It localises to the plastid. The protein localises to the chloroplast thylakoid membrane. Functionally, one of the components of the core complex of photosystem II (PSII). PSII is a light-driven water:plastoquinone oxidoreductase that uses light energy to abstract electrons from H(2)O, generating O(2) and a proton gradient subsequently used for ATP formation. It consists of a core antenna complex that captures photons, and an electron transfer chain that converts photonic excitation into a charge separation. The protein is Photosystem II reaction center protein K of Eucalyptus globulus subsp. globulus (Tasmanian blue gum).